The chain runs to 907 residues: Phosphoenolpyruvate carboxylase (907 aa).

Catalysis depends on residues His-138 and Lys-570.

Belongs to the PEPCase type 1 family. Mg(2+) serves as cofactor.

The enzyme catalyses oxaloacetate + phosphate = phosphoenolpyruvate + hydrogencarbonate. Its function is as follows. Forms oxaloacetate, a four-carbon dicarboxylic acid source for the tricarboxylic acid cycle. The chain is Phosphoenolpyruvate carboxylase from Streptococcus mutans serotype c (strain ATCC 700610 / UA159).